We begin with the raw amino-acid sequence, 82 residues long: Large ribosomal subunit protein bL27 (82 aa).

The interval 1–21 (MAHKKGASSSRNGRDSNAKRL) is disordered.

This sequence belongs to the bacterial ribosomal protein bL27 family.

The polypeptide is Large ribosomal subunit protein bL27 (Tropheryma whipplei (strain Twist) (Whipple's bacillus)).